Consider the following 560-residue polypeptide: MNIVQETKRRLAAALTDAAATARAAGEISYDELPDFVIETPRDKTHGDFAANLALLLARQARQSPRNVAAAIVRHLERPQPGVARVEVAGPGFINFTLDNQWLLPVLPAVLAEDDHYGWSNIGQGAKVQVEFVSANPTGLLHMGNARGAALGDSIANLLTAVGYDVTREFYINDAGNQIENFGLSLEARYLQALGQEASIPEDGYHGEDLVATVGRFIAKYGDKYLDTDPALRREMLVRFALEEKLDAIRRALEDFGVTYDVWFSEQSLHDSGAVARAIADLEKAGYIYEKDGALWFKATSFGDVKDEVVVRKNGIPTYFAADIAYHRNKFERGFERVINIWGADHHGHVARLKGALQALGYDPRRLEVVLMQLVRLYQGGEILRMSKRTGQYVTLEELIEEVGRDAARYFFVMLKSDSHLEFDLDLARSQSADNPVYYVQYAHARICSILRLAKDRGLEVPPAREARLELLQDPAELELIKQIAAWPDTVAGAAQALEPHRLTRFAHDLASLFHSFYTSCRVLADDPEVRKARLVLVEATRITLRNVLHLLGVTAPERM.

The short motif at 135-145 (ANPTGLLHMGN) is the 'HIGH' region element.

The protein belongs to the class-I aminoacyl-tRNA synthetase family. Monomer.

It localises to the cytoplasm. It carries out the reaction tRNA(Arg) + L-arginine + ATP = L-arginyl-tRNA(Arg) + AMP + diphosphate. This is Arginine--tRNA ligase from Moorella thermoacetica (strain ATCC 39073 / JCM 9320).